The primary structure comprises 872 residues: Adhesive plaque matrix protein (872 aa).

An N-terminal signal peptide occupies residues 1-20 (MEGIKLNLCLLCIFSCDIFA). Residues 21–41 (LSNGNIHNVYGSAYSGASAGA) are nonrepetitive linker. A run of 69 repeats spans residues 124–133 (YKAKTSYPPS), 134–143 (YKHKITYPPT), 144–153 (YKPKITYPPT), 154–163 (YKQKPSYPPS), 174–183 (YKPKITYPPT), 184–192 (YKRKPSYTP), 193–202 (YKPKATYPPT), 203–212 (YKPKITYPPT), 213–221 (YKRKPSYTP), 222–231 (YKPKTTYPPT), 232–241 (YKPKISYPSI), 242–251 (YKPKASYVSS), 252–261 (YKSKKTYPPT), 262–271 (YKPKISYPPT), 272–281 (YKPKPSYPPT), 282–291 (YKPKVTYPPT), 292–301 (YKPKPSYPPT), 302–311 (YKPKITYPPT), 312–321 (YKPKPSYPTP), 322–331 (YKQKPSYPPI), 332–341 (YKSKSSYPTS), 342–351 (YKSKKTYPPT), 352–361 (YKPKITYPPT), 362–371 (YKPKPSYPPS), 372–381 (YKPKKTYSPT), 382–391 (YKPKITYPPT), 402–411 (YKPKTTYPPT), 412–421 (YKPKISYPPT), 422–431 (YKPKASYVSS), 432–441 (YKSKKTYPPT), 442–451 (YKPKISYPPT), 452–461 (YKPKPSYPPT), 462–471 (YKPKITYPPT), 472–481 (YKPKPSYPPT), 482–491 (YKPKITYPPT), 502–511 (YKQKPSYPPI), 512–521 (YKSKSSYPTS), 522–531 (YKSKKTYPPT), 532–541 (YKPKITYPPT), 542–551 (YKPKPSYPPS), 552–561 (YKPKTTYPPT), 562–571 (YKPKIRYPPT), 572–581 (YKPKASYPPT), 582–591 (YKPKITYPPT), 602–611 (YKQKPSYPPI), 612–621 (YKSKSSYPTA), 622–631 (YKSKKTYPPT), 632–641 (YKPKITYPPT), 642–651 (YKPKPSYPPS), 652–661 (YRPKITYPPT), 662–671 (YKPKKSYPQA), 672–681 (YKSKGSYPPS), 682–691 (YQPKKTYPPS), 702–711 (YKPKISYPPT), 712–721 (YKTKPSYPAS), 722–731 (YKRKTSYPPT), 732–741 (YKPKISYPST), 742–751 (YKAKPSYPPT), 752–761 (YKPKPSYASS), 762–771 (YKPKIRYPPT), 772–781 (YKPKPSYASS), 782–791 (YKPKIRYPPT), 792–801 (YKPKPSYASS), 812–821 (YKPKPSYASS), 822–831 (YKPKITYPPT), 832–841 (YKPKISYPPT), 842–851 (YKPKITYPPT), 852–861 (YKPKISYPPA), and 862–871 (YKPKISYPSQ). Positions 124-871 (YKAKTSYPPS…YKPKISYPSQ (748 aa)) are 69 X 10 AA tandem repeats of Y-[KRQ]-[PSTAHQR]-K-[AIPTSKGV]-[STR]-Y-[PTSVA]-[PSTQA]-[STYIPAQ]. A nonapeptide 1 region spans residues 184-192 (YKRKPSYTP). The nonapeptide 2 stretch occupies residues 213–221 (YKRKPSYTP). Pro residues-rich tracts occupy residues 273–282 (KPKPSYPPTY) and 291–302 (TYKPKPSYPPTY). The tract at residues 273–781 (KPKPSYPPTY…YKPKPSYASS (509 aa)) is disordered. Low complexity predominate over residues 320 to 360 (TPYKQKPSYPPIYKSKSSYPTSYKSKKTYPPTYKPKITYPP). Residues 361–372 (TYKPKPSYPPSY) show a composition bias toward pro residues. A compositionally biased stretch (low complexity) spans 377–390 (TYSPTYKPKITYPP). The span at 391–402 (TYKPKPSYPPSY) shows a compositional bias: pro residues. Over residues 403–450 (KPKTTYPPTYKPKISYPPTYKPKASYVSSYKSKKTYPPTYKPKISYPP) the composition is skewed to low complexity. Pro residues-rich tracts occupy residues 451–462 (TYKPKPSYPPTY) and 471–482 (TYKPKPSYPPTY). The span at 501 to 540 (PYKQKPSYPPIYKSKSSYPTSYKSKKTYPPTYKPKITYPP) shows a compositional bias: low complexity. A compositionally biased stretch (pro residues) spans 541–552 (TYKPKPSYPPSY). 2 stretches are compositionally biased toward low complexity: residues 568-590 (YPPTYKPKASYPPTYKPKITYPP) and 600-640 (TPYK…TYPP). Residues 641-652 (TYKPKPSYPPSY) are compositionally biased toward pro residues. Low complexity-rich tracts occupy residues 677–690 (SYPPSYQPKKTYPP) and 698–719 (YPPTYKPKISYPPTYKTKPSYP). Low complexity predominate over residues 754–763 (PKPSYASSYK).

In terms of processing, hydroxylated on proline (mono- or dihydroxylation) and tyrosine residues (to L-DOPA = 3',4'-dihydroxyphenylalanine) of the tandem repeats. As to expression, produced by the byssal gland.

It localises to the secreted. Its function is as follows. Provides adhesiveness to the mussel's foot. Mussels produce one of the strongest water insoluble glues. The mussel's adhesive is a bundle of threads, called a byssus, formed by a fibrous collagenous core coated with adhesive proteins. The protein is Adhesive plaque matrix protein (FP1) of Mytilus coruscus (Sea mussel).